Consider the following 452-residue polypeptide: UDP-N-acetylmuramoylalanine--D-glutamate ligase (452 aa).

119–125 (GSNGKTT) is an ATP binding site.

Belongs to the MurCDEF family.

The protein resides in the cytoplasm. The catalysed reaction is UDP-N-acetyl-alpha-D-muramoyl-L-alanine + D-glutamate + ATP = UDP-N-acetyl-alpha-D-muramoyl-L-alanyl-D-glutamate + ADP + phosphate + H(+). It functions in the pathway cell wall biogenesis; peptidoglycan biosynthesis. Its function is as follows. Cell wall formation. Catalyzes the addition of glutamate to the nucleotide precursor UDP-N-acetylmuramoyl-L-alanine (UMA). This chain is UDP-N-acetylmuramoylalanine--D-glutamate ligase, found in Streptococcus pyogenes serotype M2 (strain MGAS10270).